An 833-amino-acid chain; its full sequence is Leucine--tRNA ligase (833 aa).

Residues 41–52 (PYPSGAGLHVGH) carry the 'HIGH' region motif. A 'KMSKS' region motif is present at residues 610–614 (KMSKS). K613 is a binding site for ATP.

The protein belongs to the class-I aminoacyl-tRNA synthetase family.

The protein localises to the cytoplasm. It carries out the reaction tRNA(Leu) + L-leucine + ATP = L-leucyl-tRNA(Leu) + AMP + diphosphate. In Streptococcus uberis (strain ATCC BAA-854 / 0140J), this protein is Leucine--tRNA ligase.